We begin with the raw amino-acid sequence, 249 residues long: Hydroxyacylglutathione hydrolase (249 aa).

Residues histidine 53, histidine 55, aspartate 57, histidine 58, histidine 110, aspartate 127, and histidine 165 each coordinate Zn(2+).

It belongs to the metallo-beta-lactamase superfamily. Glyoxalase II family. Monomer. The cofactor is Zn(2+).

The enzyme catalyses an S-(2-hydroxyacyl)glutathione + H2O = a 2-hydroxy carboxylate + glutathione + H(+). It participates in secondary metabolite metabolism; methylglyoxal degradation; (R)-lactate from methylglyoxal: step 2/2. Functionally, thiolesterase that catalyzes the hydrolysis of S-D-lactoyl-glutathione to form glutathione and D-lactic acid. The polypeptide is Hydroxyacylglutathione hydrolase (Hamiltonella defensa subsp. Acyrthosiphon pisum (strain 5AT)).